The primary structure comprises 283 residues: uncharacterized protein (283 aa).

The next 3 membrane-spanning stretches (helical) occupy residues 24-44 (LFGY…GMFI), 64-84 (TIAG…TLIA), and 96-116 (VIAI…GSLS).

This sequence belongs to the MscS (TC 1.A.23) family.

It is found in the cell membrane. This is an uncharacterized protein from Buchnera aphidicola subsp. Schizaphis graminum (strain Sg).